Here is a 427-residue protein sequence, read N- to C-terminus: 3-phosphoshikimate 1-carboxyvinyltransferase (427 aa).

3-phosphoshikimate contacts are provided by K20, S21, and R25. Phosphoenolpyruvate is bound at residue K20. Residues G92 and R120 each contribute to the phosphoenolpyruvate site. 4 residues coordinate 3-phosphoshikimate: S166, Q168, D312, and K339. Q168 serves as a coordination point for phosphoenolpyruvate. D312 serves as the catalytic Proton acceptor. Positions 343 and 385 each coordinate phosphoenolpyruvate.

Belongs to the EPSP synthase family. Monomer.

The protein resides in the cytoplasm. It catalyses the reaction 3-phosphoshikimate + phosphoenolpyruvate = 5-O-(1-carboxyvinyl)-3-phosphoshikimate + phosphate. The protein operates within metabolic intermediate biosynthesis; chorismate biosynthesis; chorismate from D-erythrose 4-phosphate and phosphoenolpyruvate: step 6/7. Functionally, catalyzes the transfer of the enolpyruvyl moiety of phosphoenolpyruvate (PEP) to the 5-hydroxyl of shikimate-3-phosphate (S3P) to produce enolpyruvyl shikimate-3-phosphate and inorganic phosphate. The sequence is that of 3-phosphoshikimate 1-carboxyvinyltransferase from Streptococcus pneumoniae serotype 19F (strain G54).